A 228-amino-acid polypeptide reads, in one-letter code: Protein crossbronx homolog (228 aa).

The UBC core domain maps to 14-168 (LQEYKILAEY…VEQCVEDSQR (155 aa)).

The protein belongs to the ubiquitin-conjugating enzyme family. FTS subfamily.

This chain is Protein crossbronx homolog, found in Anopheles gambiae (African malaria mosquito).